Here is an 862-residue protein sequence, read N- to C-terminus: Protein translocase subunit SecA (862 aa).

ATP contacts are provided by residues Q88, 106–110, and D506; that span reads GEGKT. Zn(2+) is bound by residues C839, C841, C850, and H851.

Belongs to the SecA family. As to quaternary structure, monomer and homodimer. Part of the essential Sec protein translocation apparatus which comprises SecA, SecYEG and auxiliary proteins SecDF-YajC and YidC. The cofactor is Zn(2+).

Its subcellular location is the cell inner membrane. It is found in the cytoplasm. The enzyme catalyses ATP + H2O + cellular proteinSide 1 = ADP + phosphate + cellular proteinSide 2.. In terms of biological role, part of the Sec protein translocase complex. Interacts with the SecYEG preprotein conducting channel. Has a central role in coupling the hydrolysis of ATP to the transfer of proteins into and across the cell membrane, serving as an ATP-driven molecular motor driving the stepwise translocation of polypeptide chains across the membrane. The protein is Protein translocase subunit SecA of Campylobacter jejuni subsp. doylei (strain ATCC BAA-1458 / RM4099 / 269.97).